We begin with the raw amino-acid sequence, 115 residues long: Ribonuclease P protein component (115 aa).

Belongs to the RnpA family. As to quaternary structure, consists of a catalytic RNA component (M1 or rnpB) and a protein subunit.

It catalyses the reaction Endonucleolytic cleavage of RNA, removing 5'-extranucleotides from tRNA precursor.. RNaseP catalyzes the removal of the 5'-leader sequence from pre-tRNA to produce the mature 5'-terminus. It can also cleave other RNA substrates such as 4.5S RNA. The protein component plays an auxiliary but essential role in vivo by binding to the 5'-leader sequence and broadening the substrate specificity of the ribozyme. The protein is Ribonuclease P protein component of Symbiobacterium thermophilum (strain DSM 24528 / JCM 14929 / IAM 14863 / T).